Consider the following 416-residue polypeptide: Serine hydroxymethyltransferase (416 aa).

Residues leucine 121 and 125–127 each bind (6S)-5,6,7,8-tetrahydrofolate; that span reads GHL. Position 229 is an N6-(pyridoxal phosphate)lysine (lysine 229).

The protein belongs to the SHMT family. As to quaternary structure, homodimer. Pyridoxal 5'-phosphate serves as cofactor.

Its subcellular location is the cytoplasm. It catalyses the reaction (6R)-5,10-methylene-5,6,7,8-tetrahydrofolate + glycine + H2O = (6S)-5,6,7,8-tetrahydrofolate + L-serine. The protein operates within one-carbon metabolism; tetrahydrofolate interconversion. Its pathway is amino-acid biosynthesis; glycine biosynthesis; glycine from L-serine: step 1/1. In terms of biological role, catalyzes the reversible interconversion of serine and glycine with tetrahydrofolate (THF) serving as the one-carbon carrier. This reaction serves as the major source of one-carbon groups required for the biosynthesis of purines, thymidylate, methionine, and other important biomolecules. Also exhibits THF-independent aldolase activity toward beta-hydroxyamino acids, producing glycine and aldehydes, via a retro-aldol mechanism. This Bordetella avium (strain 197N) protein is Serine hydroxymethyltransferase.